The primary structure comprises 580 residues: Alpha-thujene synthase, chloroplastic (580 aa).

Residues 1–32 (MALQLLTPSFSFQHSPSPHKLTTLRYTHHRIR) constitute a chloroplast transit peptide. Residues arginine 296, aspartate 333, aspartate 337, arginine 473, and aspartate 476 each coordinate (2E)-geranyl diphosphate. The Mg(2+) site is built by aspartate 333 and aspartate 337. The DDXXD motif motif lies at 333 to 337 (DDVYD). 3 residues coordinate Mg(2+): aspartate 476, threonine 480, and glutamate 484.

Belongs to the terpene synthase family. Tpsb subfamily. As to quaternary structure, monomer. Mg(2+) serves as cofactor. The cofactor is Mn(2+). In terms of tissue distribution, expressed in developing and mature fruits. Barely detectable in leaves and shoots.

The protein localises to the plastid. The protein resides in the chloroplast. It catalyses the reaction (2E)-geranyl diphosphate = alpha-thujene + diphosphate. It functions in the pathway secondary metabolite biosynthesis; terpenoid biosynthesis. Monoterpene synthase (TPS) involved in the biosynthesis of monoterpene natural products used by traditional Chinese medicine to treat headache, inflammation and intoxication. Catalyzes the conversion of (2E)-geranyl diphosphate (GPP) into alpha-thujene. The sequence is that of Alpha-thujene synthase, chloroplastic from Litsea cubeba (Aromatic litsea).